A 353-amino-acid polypeptide reads, in one-letter code: ATP-dependent kinase YFH7 (353 aa).

ATP is bound at residue 31 to 39 (GSPGSGKST).

This sequence belongs to the YFH7 family.

Functionally, ATP-dependent kinase that could be involved in endoplasmic reticulum membrane assembly. The polypeptide is ATP-dependent kinase YFH7 (YFH7) (Saccharomyces cerevisiae (strain RM11-1a) (Baker's yeast)).